An 89-amino-acid polypeptide reads, in one-letter code: Arminin 375 (89 aa).

The signal sequence occupies residues 1–18 (MKAVFAILFLAFIALTYA). A propeptide spanning residues 19–57 (KSYDEVKEEIKNEVEREIFEDLEEESDELDNYVEESNDA) is cleaved from the precursor. An Alanine amide modification is found at Ala86.

Belongs to the arminin family. In terms of tissue distribution, expressed in entodermal epithelium along the body column.

Its subcellular location is the secreted. It is found in the target cell membrane. Functionally, antimicrobial peptide with a broad-spectrum antimicrobial activity. Keeps its antibacterial activity under a wide range of salt concentrations that mimic physiological conditions of human blood, which is surprising, since Hydra is an obligate freshwater animal with nearly no salt tolerance. Does not affect red blood cells. The sequence is that of Arminin 375 from Hydra oligactis (Brown hydra).